The following is a 324-amino-acid chain: Annexin A3 (324 aa).

Annexin repeat units lie at residues 19 to 90 (FNPS…ALIT), 91 to 162 (APAV…TLAD), 174 to 246 (HLAK…AVVR), and 250 to 321 (NTPA…KICG). Lys178 bears the N6-acetyllysine mark. Thr268 is modified (phosphothreonine).

It belongs to the annexin family.

Functionally, inhibitor of phospholipase A2, also possesses anti-coagulant properties. This is Annexin A3 (Anxa3) from Rattus norvegicus (Rat).